Reading from the N-terminus, the 175-residue chain is Peptide deformylase (175 aa).

Fe cation-binding residues include C99 and H141. E142 is a catalytic residue. H145 is a Fe cation binding site.

It belongs to the polypeptide deformylase family. Fe(2+) is required as a cofactor.

The catalysed reaction is N-terminal N-formyl-L-methionyl-[peptide] + H2O = N-terminal L-methionyl-[peptide] + formate. Functionally, removes the formyl group from the N-terminal Met of newly synthesized proteins. Requires at least a dipeptide for an efficient rate of reaction. N-terminal L-methionine is a prerequisite for activity but the enzyme has broad specificity at other positions. The chain is Peptide deformylase from Rickettsia prowazekii (strain Madrid E).